The chain runs to 537 residues: MMASTTSATAAGGAFAAAKTRAGSSAAGGGACARVAAGGRRRSGVVVRCDAGVEAQAQAQAVAKAASVAALEQFKISADRYMKERSSIAVIGLSVHTAPVEMREKLAVAEELWPRAISELTSLNHIEEAAVLSTCNRMEIYVVALSWNRGIREVVDWMSKKSGIPASELREHLFMLRDSDATRHLFEVSAGLDSLVLGEGQILAQVKQVVRSGQNSGGLGKNIDRMFKDAITAGKRVRCETNISSGAVSVSSAAVELALMKLPKSECLSARMLLIGAGKMGKLVVKHLIAKGCKKVVVVNRSVERVDAIREEMKDIEIVYRPLTEMYEAAAEADVVFTSTASETPLFTKEHAEALPAISDAMGGVRLFVDISVPRNVSACVSEVGHARVYNVDDLKEVVEANKEDRLRKAMEAQTIITQELKRFEAWRDSLETVPTIKKLRSYADRIRASELEKCLQKIGEDSLTKKMRRSIEELSTGIVNKLLHGPLQHLRCDGSDSRTLDETLENMHALNRMFSLDTEKAIIEQKIKAKVEKSQN.

Residues 1-48 (MMASTTSATAAGGAFAAAKTRAGSSAAGGGACARVAAGGRRRSGVVVR) constitute a chloroplast transit peptide. Residues 134-137 (TCNR), Ser194, 199-201 (EGQ), and Gln205 each bind substrate. Cys135 functions as the Nucleophile in the catalytic mechanism. 276–281 (GAGKMG) provides a ligand contact to NADP(+).

The protein belongs to the glutamyl-tRNA reductase family.

Its subcellular location is the plastid. The protein localises to the chloroplast. The enzyme catalyses (S)-4-amino-5-oxopentanoate + tRNA(Glu) + NADP(+) = L-glutamyl-tRNA(Glu) + NADPH + H(+). It participates in porphyrin-containing compound metabolism; protoporphyrin-IX biosynthesis; 5-aminolevulinate from L-glutamyl-tRNA(Glu): step 1/2. In terms of biological role, catalyzes the NADPH-dependent reduction of glutamyl-tRNA(Glu) to glutamate 1-semialdehyde (GSA). This chain is Glutamyl-tRNA reductase, chloroplastic, found in Oryza sativa subsp. indica (Rice).